The following is a 99-amino-acid chain: Essential MCU regulator, mitochondrial (99 aa).

Residues Met1–Thr39 constitute a mitochondrion transit peptide. Residues Ala40–Phe57 are Mitochondrial matrix-facing. A helical transmembrane segment spans residues Gly58–Ser77. Topologically, residues Lys78–Asp99 are mitochondrial intermembrane.

Belongs to the SMDT1/EMRE family. As to quaternary structure, component of the uniplex complex.

The protein localises to the mitochondrion inner membrane. Functionally, essential regulatory subunit of the mitochondrial calcium uniporter complex (uniplex), a complex that mediates calcium uptake into mitochondria. Required to bridge the calcium-sensing proteins micu1 with the calcium-conducting subunit mcu. Acts by mediating activation of mcu and retention of micu1 to the mcu pore, in order to ensure tight regulation of the uniplex complex and appropriate responses to intracellular calcium signaling. The polypeptide is Essential MCU regulator, mitochondrial (Xenopus tropicalis (Western clawed frog)).